We begin with the raw amino-acid sequence, 324 residues long: UDP-N-acetylenolpyruvoylglucosamine reductase (324 aa).

An FAD-binding PCMH-type domain is found at 36–203 (FRAGGLAELM…TSVLFEGYPE (168 aa)). Arg-183 is a catalytic residue. Ser-232 serves as the catalytic Proton donor. Residue Glu-302 is part of the active site.

It belongs to the MurB family. Requires FAD as cofactor.

The protein resides in the cytoplasm. It catalyses the reaction UDP-N-acetyl-alpha-D-muramate + NADP(+) = UDP-N-acetyl-3-O-(1-carboxyvinyl)-alpha-D-glucosamine + NADPH + H(+). The protein operates within cell wall biogenesis; peptidoglycan biosynthesis. Functionally, cell wall formation. This is UDP-N-acetylenolpyruvoylglucosamine reductase from Rhizobium etli (strain CIAT 652).